The primary structure comprises 55 residues: Large ribosomal subunit protein bL33 (55 aa).

This sequence belongs to the bacterial ribosomal protein bL33 family.

In Bradyrhizobium diazoefficiens (strain JCM 10833 / BCRC 13528 / IAM 13628 / NBRC 14792 / USDA 110), this protein is Large ribosomal subunit protein bL33.